Here is a 282-residue protein sequence, read N- to C-terminus: Phenylethanolamine N-methyltransferase (282 aa).

S-adenosyl-L-methionine contacts are provided by residues tyrosine 35, tyrosine 40, glycine 79 to serine 80, tyrosine 85, aspartate 101, asparagine 106, aspartate 158 to valine 159, and alanine 181. Residues glutamate 219 and aspartate 267 each coordinate octopamine.

This sequence belongs to the class I-like SAM-binding methyltransferase superfamily. NNMT/PNMT/TEMT family. Expressed in the adrenal medulla.

The enzyme catalyses phenylethanolamine + S-adenosyl-L-methionine = N-methylphenylethanolamine + S-adenosyl-L-homocysteine + H(+). It carries out the reaction (R)-noradrenaline + S-adenosyl-L-methionine = (R)-adrenaline + S-adenosyl-L-homocysteine + H(+). The catalysed reaction is (R)-normetanephrine + S-adenosyl-L-methionine = (R)-metanephrine + S-adenosyl-L-homocysteine + H(+). It catalyses the reaction (R)-octopamine + S-adenosyl-L-methionine = (R)-synephrine + S-adenosyl-L-homocysteine + H(+). The protein operates within catecholamine biosynthesis; (R)-adrenaline biosynthesis; (R)-adrenaline from (R)-noradrenaline: step 1/1. Inhibited by p-chloromercuribenaoate. Its function is as follows. Catalyzes the transmethylation of nonepinephrine (noradrenaline) to form epinephrine (adrenaline), using S-adenosyl-L-methionine as the methyl donor. Other substrates include phenylethanolamine, octopamine and normetanephrine. The sequence is that of Phenylethanolamine N-methyltransferase (PNMT) from Macaca mulatta (Rhesus macaque).